The following is a 181-amino-acid chain: Protein Syd (181 aa).

The protein belongs to the Syd family.

It localises to the cell inner membrane. In terms of biological role, interacts with the SecY protein in vivo. May bind preferentially to an uncomplexed state of SecY, thus functioning either as a chelating agent for excess SecY in the cell or as a regulatory factor that negatively controls the translocase function. The sequence is that of Protein Syd from Escherichia fergusonii (strain ATCC 35469 / DSM 13698 / CCUG 18766 / IAM 14443 / JCM 21226 / LMG 7866 / NBRC 102419 / NCTC 12128 / CDC 0568-73).